The sequence spans 433 residues: MQRFTGLVTATTLATYLLVVLGVATELTGGVSPAAVAHYVTAGAVWLLLVAAAALAWRDSRLPRVKWGVTAAAVAYPAQAAVGMAVLASGGPGQLHLFGGVGVFALLLITLTWHLDREVEPRERAAATAFNREGDGDDSVLLYRLPDGLRRYVELTKPRLMWLLCLLALSGMALATVTGAALDGVTIAATLFGGVLAVGAAGTFNHVYERDRDRRMNRTADRPVATDAVGVGRATAFGVGLLVVSMAVLVWLVNPLAAALTAVAVVYYAVVYTVVLKPTTTWNTVIGGGAGALPAVIGWAAVAGSIGLPALLLAAVVFCWTPAHFYNLAIAYRDDYARGDYPMLPVVAGVAATRRRILYWLGATLLVAGALGAVAGFGPVYALTSAVVGFGFLWTVVVQFRTESDRDAYRSFHASNAYLGALLVAILVETMVI.

Residues 1–164 (MQRFTGLVTA…LTKPRLMWLL (164 aa)) form a unknown region. Helical transmembrane passes span 4-24 (FTGL…LGVA), 35-55 (AVAH…AAAL), 67-87 (WGVT…MAVL), 95-115 (LHLF…TWHL), 160-180 (LMWL…VTGA), 184-204 (GVTI…AGTF), 236-256 (AFGV…VNPL), 257-277 (AAAL…VVLK), 282-304 (WNTV…AVAG), 308-330 (LPAL…NLAI), 357-377 (ILYW…VAGF), 378-398 (GPVY…TVVV), and 413-433 (HASN…TMVI). A protoheme IX prenyltransferase region spans residues 165-430 (CLLALSGMAL…ALLVAILVET (266 aa)).

It in the C-terminal section; belongs to the UbiA prenyltransferase family. Protoheme IX farnesyltransferase subfamily.

The protein localises to the cell membrane. It carries out the reaction heme b + (2E,6E)-farnesyl diphosphate + H2O = Fe(II)-heme o + diphosphate. It functions in the pathway porphyrin-containing compound metabolism; heme O biosynthesis; heme O from protoheme: step 1/1. Functionally, converts heme B (protoheme IX) to heme O by substitution of the vinyl group on carbon 2 of heme B porphyrin ring with a hydroxyethyl farnesyl side group. This Natronomonas pharaonis (strain ATCC 35678 / DSM 2160 / CIP 103997 / JCM 8858 / NBRC 14720 / NCIMB 2260 / Gabara) (Halobacterium pharaonis) protein is Protoheme IX farnesyltransferase 2 (ctaB2).